We begin with the raw amino-acid sequence, 189 residues long: MLNIVIFGAPGSGKGTQSERIVEKYGINHISTGDVLRAEIKNGTELGKTAKGYIDQGQLIPDELMIDILASVFDSFKDSKGVIFDGFPRTIAQAEALKKMLAERGQDVSVMLDLEVPEDELMVRLIKRGKDSGRADDNEETIKKRLHVYHSQTSPLIDWYKNEKKYQHINGLGTMDGIFADICEAVDKL.

11 to 16 contributes to the ATP binding site; that stretch reads GSGKGT. The tract at residues 31-60 is NMP; the sequence is STGDVLRAEIKNGTELGKTAKGYIDQGQLI. AMP is bound by residues Thr32, Arg37, 58–60, 86–89, and Gln93; these read QLI and GFPR. The segment at 127 to 137 is LID; the sequence is KRGKDSGRADD. Position 128 (Arg128) interacts with ATP. Arg134 and Arg145 together coordinate AMP. Gly173 is a binding site for ATP.

Belongs to the adenylate kinase family. As to quaternary structure, monomer.

It localises to the cytoplasm. The enzyme catalyses AMP + ATP = 2 ADP. It functions in the pathway purine metabolism; AMP biosynthesis via salvage pathway; AMP from ADP: step 1/1. Its function is as follows. Catalyzes the reversible transfer of the terminal phosphate group between ATP and AMP. Plays an important role in cellular energy homeostasis and in adenine nucleotide metabolism. The protein is Adenylate kinase of Bacteroides thetaiotaomicron (strain ATCC 29148 / DSM 2079 / JCM 5827 / CCUG 10774 / NCTC 10582 / VPI-5482 / E50).